A 351-amino-acid polypeptide reads, in one-letter code: Methionine import ATP-binding protein MetN (351 aa).

Residues 2-241 (IVTEALTKAF…PQHAVTRAFV (240 aa)) enclose the ABC transporter domain. 38–45 (GRSGAGKS) lines the ATP pocket.

This sequence belongs to the ABC transporter superfamily. Methionine importer (TC 3.A.1.24) family. As to quaternary structure, the complex is composed of two ATP-binding proteins (MetN), two transmembrane proteins (MetI) and a solute-binding protein (MetQ).

The protein localises to the cell inner membrane. It catalyses the reaction L-methionine(out) + ATP + H2O = L-methionine(in) + ADP + phosphate + H(+). The enzyme catalyses D-methionine(out) + ATP + H2O = D-methionine(in) + ADP + phosphate + H(+). Part of the ABC transporter complex MetNIQ involved in methionine import. Responsible for energy coupling to the transport system. In Rhodospirillum rubrum (strain ATCC 11170 / ATH 1.1.1 / DSM 467 / LMG 4362 / NCIMB 8255 / S1), this protein is Methionine import ATP-binding protein MetN.